A 689-amino-acid polypeptide reads, in one-letter code: Glycine--tRNA ligase beta subunit (689 aa).

Belongs to the class-II aminoacyl-tRNA synthetase family. As to quaternary structure, tetramer of two alpha and two beta subunits.

It localises to the cytoplasm. The enzyme catalyses tRNA(Gly) + glycine + ATP = glycyl-tRNA(Gly) + AMP + diphosphate. The chain is Glycine--tRNA ligase beta subunit from Shewanella baltica (strain OS195).